Consider the following 387-residue polypeptide: O-methyltransferase fsr2 (387 aa).

Aspartate 231 is an S-adenosyl-L-methionine binding site. Catalysis depends on histidine 280, which acts as the Proton acceptor.

Belongs to the class I-like SAM-binding methyltransferase superfamily. Cation-independent O-methyltransferase family. COMT subfamily.

It functions in the pathway polyketide biosynthesis. O-methyltransferase; part of the gene cluster that mediates the biosynthesis of fusarubins, highly pigmented naphthoquinones responsible for the coloration of the fruiting bodies. The non-reducing polyketide synthase FSR1 is responsible for the condensation of seven acetyl-CoA units to yield a haptaketide. After rings A and B are formed by aldol-type cyclization, the PKS-derived product is released as 6-O-demethylfusarubinaldehyde. Then, two hydroxyl groups at C-5 and C-10 are incorporated by FSR3, and simultaneously hydroxyl groups at C-6 and C-8 are methylated by FSR2. The aldehyde is, on the one hand, reduced by FSR3 to 8-O-methylfusarubin alcohol, which equilibrates mainly with 8-O-methylfusarubin and only small amounts of 8-O-methylnectriafurone. On the other hand, the aldehyde can be oxidized to form 8-O-methylfusarubinic acid, a reaction driven by FSR3 equilibrating with 8-O-methylfusarubinlactone, finally resulting in 8-O-methylanhydrofusarubinlactol after a further reduction step and loss of water. 8-O-Methylfusarubinic acid can also undergo decarboxylation, resulting in 8-O-methyl-13-hydroxynorjavanicin after another hydroxylation step at C-13. Both steps are most likely also accomplished by FSR3. No enzymatic function has been determined so far for either FSR4 and FSR5. Their deletion does not alter the product spectrum, but the possibility that they catalyze specific enzymatic steps during perithecium development cannot be ruled out. FSR4 might possess a regulatory function in the biosynthesis of fusarubins. The chain is O-methyltransferase fsr2 from Gibberella fujikuroi (strain CBS 195.34 / IMI 58289 / NRRL A-6831) (Bakanae and foot rot disease fungus).